The sequence spans 127 residues: Interacting with cytoskeleton protein 1 (127 aa).

It is found in the vacuole membrane. Functionally, required for viability of cells lacking mtDNA. This chain is Interacting with cytoskeleton protein 1 (ICY1), found in Saccharomyces cerevisiae (strain ATCC 204508 / S288c) (Baker's yeast).